Consider the following 94-residue polypeptide: MVRRLRFSGPKTSIICSPMTSLKTSIKTITYLSDIGCLEIQGASLAGSGSGGEHAAVLYSLIGTCRLNNVELEKWLCYGIEHIQDWSANLVRDL.

This is an uncharacterized protein from Escherichia coli (strain K12).